Here is a 262-residue protein sequence, read N- to C-terminus: Oxidoreductase GME11367 (262 aa).

It belongs to the avfA family.

It functions in the pathway secondary metabolite biosynthesis. In terms of biological role, oxidoreductase; part of the gene cluster that mediates the biosynthesis of dibenzodioxocinones such as pestalotiollide B, a novel class of inhibitors against cholesterol ester transfer protein (CEPT). The biosynthesis initiates from condensation of acetate and malonate units catalyzed by the non-reducing PKS pks8/GME11356. Pks8/GME11356 lacks a thioesterase (TE) domain, which is important to the cyclizing of the third ring of atrochrysone carboxylic acid, and the esterase GME11355 might play the role of TE and catalyzes the cyclization reaction of the C ring. The lactamase-like protein GME11357 (or other beta-lactamases in Pestalotiopsis microspora) probably hydrolyzes the thioester bond between the ACP of pks8/GME11356 and the intermediate to release atrochrysone carboxylic acid, which is spontaneously dehydrates to form endocrocin anthrone. Endocrocin anthrone is further converted to emodin via the endocrocin intermediate. Emodin is then oxidized by several enzymes such as the Baeyer-Villiger oxidase GME11358, the oxidoreductase GME11367, the short chain dehydrogenase/reductase GME11373, as well as by other oxidoreductases from the cluster, to modify the A and C rings and open the B ring, and finally yield monodictyphenone. The prenyltransferase GME11375 may catalyze the addition reaction between the C5 side chains and the carbon bone of dibenzodioxocinones. The remaining biochemical reactions to the final product dibenzodioxocinones should be methylation catalyzed by methyltransferase GME11366 and reduction and lactonization reaction catalyzed by a series of oxidordeuctases. This is Oxidoreductase GME11367 from Pestalotiopsis microspora.